The chain runs to 298 residues: GTPase Era (298 aa).

The Era-type G domain maps to 3–170; sequence KSGFVAILGR…VQLLKDNLEE (168 aa). The G1 stretch occupies residues 11 to 18; it reads GRPNVGKS. 11–18 is a GTP binding site; sequence GRPNVGKS. Residues 37–41 are G2; that stretch reads QTTRN. Residues 58 to 61 form a G3 region; sequence DTPG. GTP-binding positions include 58-62 and 120-123; these read DTPGI and NKID. The tract at residues 120-123 is G4; it reads NKID. Residues 149–151 form a G5 region; the sequence is ISA. Residues 201–279 form the KH type-2 domain; the sequence is TQQEVPHSVA…YLETWVKVKK (79 aa).

It belongs to the TRAFAC class TrmE-Era-EngA-EngB-Septin-like GTPase superfamily. Era GTPase family. As to quaternary structure, monomer.

It is found in the cytoplasm. The protein localises to the cell membrane. An essential GTPase that binds both GDP and GTP, with rapid nucleotide exchange. Plays a role in 16S rRNA processing and 30S ribosomal subunit biogenesis and possibly also in cell cycle regulation and energy metabolism. In Streptococcus equi subsp. equi (strain 4047), this protein is GTPase Era.